The primary structure comprises 152 residues: Probable flagellum biosynthesis repressor protein FlbT (152 aa).

This sequence belongs to the FlbT family.

In terms of biological role, has a post-transcriptional repressor function in flagellum biogenesis. Associates with the 5'-UTR of fljK mRNA and promotes its degradation. The chain is Probable flagellum biosynthesis repressor protein FlbT from Brucella canis (strain ATCC 23365 / NCTC 10854 / RM-666).